A 333-amino-acid chain; its full sequence is Adenosine deaminase (333 aa).

Positions 12 and 14 each coordinate Zn(2+). Residues histidine 14, aspartate 16, and glycine 170 each contribute to the substrate site. Histidine 197 lines the Zn(2+) pocket. Glutamate 200 (proton donor) is an active-site residue. Aspartate 278 contributes to the Zn(2+) binding site. Position 279 (aspartate 279) interacts with substrate.

It belongs to the metallo-dependent hydrolases superfamily. Adenosine and AMP deaminases family. Adenosine deaminase subfamily. The cofactor is Zn(2+).

The enzyme catalyses adenosine + H2O + H(+) = inosine + NH4(+). The catalysed reaction is 2'-deoxyadenosine + H2O + H(+) = 2'-deoxyinosine + NH4(+). Catalyzes the hydrolytic deamination of adenosine and 2-deoxyadenosine. This chain is Adenosine deaminase, found in Edwardsiella ictaluri (strain 93-146).